A 657-amino-acid chain; its full sequence is 1-deoxy-D-xylulose-5-phosphate synthase (657 aa).

Thiamine diphosphate-binding positions include H73 and 113–115; that span reads SHA. Mg(2+) is bound at residue D145. Thiamine diphosphate contacts are provided by residues 146–147, N175, Y293, and E375; that span reads GA. Residue N175 coordinates Mg(2+).

This sequence belongs to the transketolase family. DXPS subfamily. Homodimer. Requires Mg(2+) as cofactor. The cofactor is thiamine diphosphate.

The catalysed reaction is D-glyceraldehyde 3-phosphate + pyruvate + H(+) = 1-deoxy-D-xylulose 5-phosphate + CO2. It functions in the pathway metabolic intermediate biosynthesis; 1-deoxy-D-xylulose 5-phosphate biosynthesis; 1-deoxy-D-xylulose 5-phosphate from D-glyceraldehyde 3-phosphate and pyruvate: step 1/1. Catalyzes the acyloin condensation reaction between C atoms 2 and 3 of pyruvate and glyceraldehyde 3-phosphate to yield 1-deoxy-D-xylulose-5-phosphate (DXP). In Pseudarthrobacter chlorophenolicus (strain ATCC 700700 / DSM 12829 / CIP 107037 / JCM 12360 / KCTC 9906 / NCIMB 13794 / A6) (Arthrobacter chlorophenolicus), this protein is 1-deoxy-D-xylulose-5-phosphate synthase.